A 228-amino-acid chain; its full sequence is UPF0758 protein STER_1430 (228 aa).

The MPN domain maps to 103 to 225 (QIMSSQQVAR…YYSFREERED (123 aa)). Positions 174, 176, and 187 each coordinate Zn(2+). The JAMM motif signature appears at 174-187 (HNHPSGEAYPSRND).

Belongs to the UPF0758 family.

This is UPF0758 protein STER_1430 from Streptococcus thermophilus (strain ATCC BAA-491 / LMD-9).